A 314-amino-acid chain; its full sequence is Cytochrome bo(3) ubiquinol oxidase subunit 2 (314 aa).

An N-terminal signal peptide occupies residues 1–23; the sequence is MSKKRYPRLFGILPFLGMLLLSG. Residue cysteine 24 is the site of N-palmitoyl cysteine attachment. Cysteine 24 is lipidated: S-diacylglycerol cysteine. Residues 24 to 42 lie on the Periplasmic side of the membrane; it reads CNWTLLDPKGQVGIEQKNL. The helical transmembrane segment at 43-63 threads the bilayer; the sequence is ILIATGLMLLVVIPVIIMTVV. At 64–86 the chain is on the cytoplasmic side; the sequence is FAWKYRASNKAATYTPDWSHSTK. A helical membrane pass occupies residues 87–107; that stretch reads IEAAVWIIPILIIIALGYFTY. Over 108-314 the chain is Periplasmic; the sequence is HSTHKLDPYR…SMQPAAGAEE (207 aa). A compositionally biased stretch (basic and acidic residues) spans 278–293; the sequence is YEGMNRGRPSHEEAGS. A disordered region spans residues 278–314; the sequence is YEGMNRGRPSHEEAGSKDLATTKGVESSMQPAAGAEE.

It belongs to the cytochrome c oxidase subunit 2 family. As to quaternary structure, heterooctamer of two A chains, two B chains, two C chains and two D chains.

Its subcellular location is the cell inner membrane. Its function is as follows. Cytochrome bo(3) ubiquinol terminal oxidase is the component of the aerobic respiratory chain of E.coli that predominates when cells are grown at high aeration. Has proton pump activity across the membrane in addition to electron transfer, pumping 2 protons/electron. The chain is Cytochrome bo(3) ubiquinol oxidase subunit 2 (cyoA) from Pseudomonas putida (Arthrobacter siderocapsulatus).